Here is a 219-residue protein sequence, read N- to C-terminus: Vacuolar protein sorting-associated protein 32 homolog 2 (219 aa).

2 coiled-coil regions span residues Lys-10–Gly-41 and Thr-117–Gln-176. The segment at Glu-168 to Leu-219 is disordered.

This sequence belongs to the SNF7 family. In terms of assembly, component of the endosomal sorting required for transport complex III (ESCRT-III), composed at least of VPS2, VPS20, VPS24 and VPS32. Interacts with SKD1. Interacts with BRO1/ALIX.

It is found in the endosome. Functionally, component of the ESCRT-III complex, which is required for multivesicular bodies (MVBs) formation and sorting of endosomal cargo proteins into MVBs. The ESCRT-III complex is probably involved in the concentration of MVB cargo. The sequence is that of Vacuolar protein sorting-associated protein 32 homolog 2 (VPS32.2) from Arabidopsis thaliana (Mouse-ear cress).